The sequence spans 70 residues: Large ribosomal subunit protein eL38 (70 aa).

This sequence belongs to the eukaryotic ribosomal protein eL38 family.

This is Large ribosomal subunit protein eL38 (RpL38) from Bombyx mori (Silk moth).